A 199-amino-acid polypeptide reads, in one-letter code: Interleukin-11 (199 aa).

Positions 1–21 (MNCVCRLVLVVLSLWPDRVVA) are cleaved as a signal peptide. Residues 182-190 (HLTLDWAVR) form an important for interaction with IL11RA and for the stimulation of cell proliferation region.

Belongs to the IL-6 superfamily. In terms of assembly, interacts with IL11RA to associate with IL6ST, giving rise to a multimeric signaling complex.

It is found in the secreted. Its function is as follows. Cytokine that stimulates the proliferation of hematopoietic stem cells and megakaryocyte progenitor cells and induces megakaryocyte maturation resulting in increased platelet production. Also promotes the proliferation of hepatocytes in response to liver damage. Binding to its receptor formed by IL6ST and IL11RA activates a signaling cascade that promotes cell proliferation. Signaling leads to the activation of intracellular protein kinases and the phosphorylation of STAT3. The interaction with the membrane-bound IL11RA and IL6ST stimulates 'classic signaling', whereas the binding of IL11 and soluble IL11RA to IL6ST stimulates 'trans-signaling'. The chain is Interleukin-11 from Rattus norvegicus (Rat).